Consider the following 261-residue polypeptide: Carbonic anhydrase 1 (261 aa).

Ala-2 carries the N-acetylalanine modification. Positions 4–261 (PDWGYDDKNG…LKGRTVRASF (258 aa)) constitute an Alpha-carbonic anhydrase domain. The active-site Proton donor/acceptor is His-65. His-95, His-97, and His-120 together coordinate Zn(2+). Substrate is bound by residues Thr-200 and 200–201 (TH). Residues 235–261 (EGDNPVPSQRNNRPTQPLKGRTVRASF) are disordered. The span at 240–249 (VPSQRNNRPT) shows a compositional bias: polar residues.

The protein belongs to the alpha-carbonic anhydrase family. Requires Zn(2+) as cofactor.

It localises to the cytoplasm. It carries out the reaction hydrogencarbonate + H(+) = CO2 + H2O. The enzyme catalyses urea = cyanamide + H2O. Inhibited by acetazolamide. Catalyzes the reversible hydration of carbon dioxide. Can hydrate cyanamide to urea. The chain is Carbonic anhydrase 1 (CA1) from Macaca nemestrina (Pig-tailed macaque).